The following is a 461-amino-acid chain: Transcription factor SOX-10 (461 aa).

Disordered stretches follow at residues 1 to 60 (MADD…ADDD), 154 to 191 (LRMQ…GEAG), 205 to 268 (LDHR…DFGN), 350 to 369 (KAQV…DQPS), and 433 to 461 (AISD…LSRP). Residues 30 to 42 (ASDNSSHLASSGN) are compositionally biased toward polar residues. A dimerization (DIM) region spans residues 56–96 (EADDDKFPVCIREAVSQVLSGYDWTLVPMPVRVNGSNKSKP). A DNA-binding region (HMG box) is located at residues 98–166 (VKRPMNAFMV…QHKKDHPDYK (69 aa)). Residues 154 to 167 (LRMQHKKDHPDYKY) are compositionally biased toward basic and acidic residues. Over residues 181 to 191 (EGEGQVEGEAG) the composition is skewed to gly residues. The segment at 221 to 306 (PEHSSGQSHG…NGHAGHPGHV (86 aa)) is transactivation domain (TAM). Basic and acidic residues predominate over residues 247–264 (ADSKREGRSLGEGGKPHI). The segment at 350-461 (KAQVKTEGSA…QPVYTTLSRP (112 aa)) is transactivation domain (TAC). Residues 441-461 (VPQSHSPTHWEQPVYTTLSRP) are compositionally biased toward polar residues.

Its subcellular location is the cytoplasm. It is found in the nucleus. Its function is as follows. Transcription factor that plays a central role in developing and mature glia. Specifically activates expression of myelin genes, during oligodendrocyte (OL) maturation, thereby playing a central role in oligodendrocyte maturation and CNS myelination. This is Transcription factor SOX-10 (SOX10) from Gallus gallus (Chicken).